We begin with the raw amino-acid sequence, 317 residues long: GPI-specific phospholipase A2-like PGAP3 (317 aa).

Residues 1 to 18 form the signal peptide; sequence MAPFLVLFLAGVVSASRG. At 19–93 the chain is on the lumenal side; it reads DREPVYRDCV…QFHGKWPFSR (75 aa). N-linked (GlcNAc...) asparagine glycosylation is present at asparagine 35. Residues 94 to 114 form a helical membrane-spanning segment; the sequence is FLFFQEPASALASFLNGVASL. Over 115–132 the chain is Cytoplasmic; sequence LMLFRYRSSVPSSCQMYR. The helical transmembrane segment at 133 to 153 threads the bilayer; the sequence is TCLAFSMVSVNAWFWSTIFHT. The Lumenal segment spans residues 154–163; it reads RDTALTEKMD. Residues 164–180 form a helical membrane-spanning segment; that stretch reads YFCASSVILHSIYLCCM. Residues 181–189 are Cytoplasmic-facing; sequence RTFGLQYPS. A helical membrane pass occupies residues 190–210; sequence IANAFGAFLVLLFACHISYLT. Residues 211-219 are Lumenal-facing; sequence LGRFDYSYN. The helical transmembrane segment at 220-240 threads the bilayer; the sequence is MAANTSFGIVNLMWWLAWCMW. Topologically, residues 241-251 are cytoplasmic; it reads RRFHQPYLWKC. Residues 252–272 form a helical membrane-spanning segment; the sequence is VLVVVLLQSLALLELLDFPPV. Methionine 273 is a topological domain (lumenal). Residues 274–293 form a helical membrane-spanning segment; the sequence is WILDAHALWHFSTIPLHFLF. Residues 294 to 317 are Cytoplasmic-facing; the sequence is YSFLRDDSLYLLKVNHDDDIPKLD.

The protein belongs to the PGAP3 family.

Its subcellular location is the golgi apparatus membrane. Its function is as follows. Involved in the fatty acid remodeling steps of GPI-anchor maturation where the unsaturated acyl chain at sn-2 of inositol phosphate is replaced by a saturated stearoyl chain. May catalyze the first step of the fatty acid remodeling, by removing the unsaturated acyl chain at sn-2 of inositol phosphate, generating a lyso-GPI intermediate. The fatty acid remodeling steps is critical for the integration of GPI-APs into lipid rafts. The protein is GPI-specific phospholipase A2-like PGAP3 of Xenopus laevis (African clawed frog).